The sequence spans 377 residues: 4-hydroxy-3-methylbut-2-en-1-yl diphosphate synthase (flavodoxin) (377 aa).

4 residues coordinate [4Fe-4S] cluster: Cys275, Cys278, Cys310, and Glu317.

This sequence belongs to the IspG family. The cofactor is [4Fe-4S] cluster.

It catalyses the reaction (2E)-4-hydroxy-3-methylbut-2-enyl diphosphate + oxidized [flavodoxin] + H2O + 2 H(+) = 2-C-methyl-D-erythritol 2,4-cyclic diphosphate + reduced [flavodoxin]. It functions in the pathway isoprenoid biosynthesis; isopentenyl diphosphate biosynthesis via DXP pathway; isopentenyl diphosphate from 1-deoxy-D-xylulose 5-phosphate: step 5/6. Its function is as follows. Converts 2C-methyl-D-erythritol 2,4-cyclodiphosphate (ME-2,4cPP) into 1-hydroxy-2-methyl-2-(E)-butenyl 4-diphosphate. The chain is 4-hydroxy-3-methylbut-2-en-1-yl diphosphate synthase (flavodoxin) from Ruegeria sp. (strain TM1040) (Silicibacter sp.).